Here is a 150-residue protein sequence, read N- to C-terminus: Macrodomain Ter protein (150 aa).

The protein belongs to the MatP family. As to quaternary structure, homodimer.

Its subcellular location is the cytoplasm. Required for spatial organization of the terminus region of the chromosome (Ter macrodomain) during the cell cycle. Prevents early segregation of duplicated Ter macrodomains during cell division. Binds specifically to matS, which is a 13 bp signature motif repeated within the Ter macrodomain. This is Macrodomain Ter protein from Escherichia coli O8 (strain IAI1).